Reading from the N-terminus, the 381-residue chain is Endolytic peptidoglycan transglycosylase RlpA (381 aa).

Residues 1 to 19 (MRKQLPVICVAAGIVLLAA) form the signal peptide. Cysteine 20 carries the N-palmitoyl cysteine lipid modification. The S-diacylglycerol cysteine moiety is linked to residue cysteine 20. Residues 196–274 (LPPRPDLSGG…QPAPVSAPVA (79 aa)) are disordered. The span at 208–218 (SASSAPAQPQG) shows a compositional bias: low complexity. An SPOR domain is found at 304–380 (AAASGRFVVQ…AQLQSFIASA (77 aa)).

The protein belongs to the RlpA family.

It localises to the cell membrane. Lytic transglycosylase with a strong preference for naked glycan strands that lack stem peptides. In Salmonella typhimurium (strain LT2 / SGSC1412 / ATCC 700720), this protein is Endolytic peptidoglycan transglycosylase RlpA.